Reading from the N-terminus, the 156-residue chain is 6,7-dimethyl-8-ribityllumazine synthase (156 aa).

5-amino-6-(D-ribitylamino)uracil contacts are provided by residues Phe23, 57–59, and 81–83; these read AYE and AII. 86-87 lines the (2S)-2-hydroxy-3-oxobutyl phosphate pocket; that stretch reads GT. The active-site Proton donor is the His89. Phe114 is a binding site for 5-amino-6-(D-ribitylamino)uracil. Position 128 (Arg128) interacts with (2S)-2-hydroxy-3-oxobutyl phosphate.

It belongs to the DMRL synthase family.

The catalysed reaction is (2S)-2-hydroxy-3-oxobutyl phosphate + 5-amino-6-(D-ribitylamino)uracil = 6,7-dimethyl-8-(1-D-ribityl)lumazine + phosphate + 2 H2O + H(+). It participates in cofactor biosynthesis; riboflavin biosynthesis; riboflavin from 2-hydroxy-3-oxobutyl phosphate and 5-amino-6-(D-ribitylamino)uracil: step 1/2. Catalyzes the formation of 6,7-dimethyl-8-ribityllumazine by condensation of 5-amino-6-(D-ribitylamino)uracil with 3,4-dihydroxy-2-butanone 4-phosphate. This is the penultimate step in the biosynthesis of riboflavin. This is 6,7-dimethyl-8-ribityllumazine synthase from Helicobacter pylori (strain ATCC 700392 / 26695) (Campylobacter pylori).